The sequence spans 538 residues: Metal transporter Nramp5 (538 aa).

12 helical membrane-spanning segments follow: residues 44 to 64, 77 to 97, 118 to 138, 140 to 160, 181 to 201, 227 to 247, 264 to 284, 324 to 346, 365 to 385, 391 to 411, 427 to 447, and 467 to 487; these read FLAHVGPGFMVSLAYLDPGNL, ELLWVILIGLIFALIIQSLAA, FVKIFLWLLAELAVIAADIPE, IGTAFAFNILFHIPVWVGVLI, FLISMLVFVMAACFFGELSIV, IALLGALVMPHNLFLHSALVL, FFLYESGFALFVALLINIAVV, SAIVYGVALLASGQSSTITGTYA, NLMTRTIAIAPSLIVSIIGGS, LIIIASMILSFELPFALIPLL, IYIIVFSWFLGLLIIGINMYF, and VLVGAAVFPFMLVYIVAVVYL. The interval 518-538 is disordered; that stretch reads AVDDDEPLPYRDDLADIPLPR.

It belongs to the NRAMP (TC 2.A.55) family.

The protein localises to the membrane. Probable metal transporter. The polypeptide is Metal transporter Nramp5 (NRAMP5) (Oryza sativa subsp. japonica (Rice)).